Reading from the N-terminus, the 153-residue chain is Endoribonuclease YbeY (153 aa).

Zn(2+) is bound by residues H114, H118, and H124.

Belongs to the endoribonuclease YbeY family. Zn(2+) serves as cofactor.

It is found in the cytoplasm. Single strand-specific metallo-endoribonuclease involved in late-stage 70S ribosome quality control and in maturation of the 3' terminus of the 16S rRNA. The sequence is that of Endoribonuclease YbeY from Shewanella baltica (strain OS185).